We begin with the raw amino-acid sequence, 235 residues long: MPRFCNSRSGALLLALLLQTSIDVWSWCLESSQCQDLTTESNLLACIRACRLDLSAETPVFPGNGDEQPLTENPRKYVMGHFRWDRFGPRNSSSAGGSAQRRAEEETAGGDGRPEPSPREGKRSYSMEHFRWGKPVGKKRRPVKVYPNVAENESAEAFPLEFKRELEGEQPDGLEQVLEPDTEKADGPYRVEHFRWGNPPKDKRYGGFMTSEKSQTPLVTLFKNAIIKNVHKKGQ.

The first 26 residues, 1–26 (MPRFCNSRSGALLLALLLQTSIDVWS), serve as a signal peptide directing secretion. The residue at position 87 (Phe87) is a Phenylalanine amide. Residues 88 to 128 (GPRNSSSAGGSAQRRAEEETAGGDGRPEPSPREGKRSYSME) are disordered. Over residues 112 to 128 (GRPEPSPREGKRSYSME) the composition is skewed to basic and acidic residues. N-acetylserine; in Corticotropin is present on Ser124. Val136 carries the valine amide modification. Asn152 is a glycosylation site (N-linked (GlcNAc...) asparagine). The residue at position 154 (Ser154) is a Phosphoserine. Residues 169–209 (EQPDGLEQVLEPDTEKADGPYRVEHFRWGNPPKDKRYGGFM) are disordered. Basic and acidic residues predominate over residues 181–205 (DTEKADGPYRVEHFRWGNPPKDKRY).

This sequence belongs to the POMC family. In terms of processing, specific enzymatic cleavages at paired basic residues yield the different active peptides. As to expression, ACTH and MSH are produced by the pituitary gland.

It is found in the secreted. Its function is as follows. Stimulates the adrenal glands to release cortisol. Anorexigenic peptide. Increases the pigmentation of skin by increasing melanin production in melanocytes. Functionally, increases the pigmentation of skin by increasing melanin production in melanocytes. In terms of biological role, endogenous orexigenic opiate. Its function is as follows. Endogenous opiate. This is Pro-opiomelanocortin (Pomc) from Rattus norvegicus (Rat).